The sequence spans 601 residues: Elongation factor 4 (601 aa).

Residues 7-189 (SHIRNFSIIA…SIVQLVPPPQ (183 aa)) form the tr-type G domain. GTP is bound by residues 19 to 24 (DHGKST) and 136 to 139 (NKID).

This sequence belongs to the TRAFAC class translation factor GTPase superfamily. Classic translation factor GTPase family. LepA subfamily.

Its subcellular location is the cell inner membrane. The catalysed reaction is GTP + H2O = GDP + phosphate + H(+). Required for accurate and efficient protein synthesis under certain stress conditions. May act as a fidelity factor of the translation reaction, by catalyzing a one-codon backward translocation of tRNAs on improperly translocated ribosomes. Back-translocation proceeds from a post-translocation (POST) complex to a pre-translocation (PRE) complex, thus giving elongation factor G a second chance to translocate the tRNAs correctly. Binds to ribosomes in a GTP-dependent manner. The protein is Elongation factor 4 of Trichodesmium erythraeum (strain IMS101).